Reading from the N-terminus, the 448-residue chain is Methylenetetrahydrofolate--tRNA-(uracil-5-)-methyltransferase TrmFO (448 aa).

13-18 (GAGLAG) provides a ligand contact to FAD.

This sequence belongs to the MnmG family. TrmFO subfamily. It depends on FAD as a cofactor.

The protein resides in the cytoplasm. It carries out the reaction uridine(54) in tRNA + (6R)-5,10-methylene-5,6,7,8-tetrahydrofolate + NADH + H(+) = 5-methyluridine(54) in tRNA + (6S)-5,6,7,8-tetrahydrofolate + NAD(+). The catalysed reaction is uridine(54) in tRNA + (6R)-5,10-methylene-5,6,7,8-tetrahydrofolate + NADPH + H(+) = 5-methyluridine(54) in tRNA + (6S)-5,6,7,8-tetrahydrofolate + NADP(+). Its function is as follows. Catalyzes the folate-dependent formation of 5-methyl-uridine at position 54 (M-5-U54) in all tRNAs. This chain is Methylenetetrahydrofolate--tRNA-(uracil-5-)-methyltransferase TrmFO, found in Streptococcus pyogenes serotype M6 (strain ATCC BAA-946 / MGAS10394).